A 141-amino-acid chain; its full sequence is Pancreatic progenitor cell differentiation and proliferation factor-like protein (141 aa).

The tract at residues 72–141 (DQSACGGNGP…GAPKDTNSPQ (70 aa)) is disordered. Low complexity predominate over residues 95 to 105 (SLLQQEESQLL). Polar residues predominate over residues 112–122 (GTVNRFRNSQT).

The protein belongs to the PPDPF family.

This chain is Pancreatic progenitor cell differentiation and proliferation factor-like protein, found in Bos taurus (Bovine).